We begin with the raw amino-acid sequence, 334 residues long: Trans-1,2-dihydrobenzene-1,2-diol dehydrogenase (334 aa).

The protein belongs to the Gfo/Idh/MocA family. As to quaternary structure, homodimer. As to expression, kidney.

The catalysed reaction is (1R,2R)-1,2-dihydrobenzene-1,2-diol + NADP(+) = catechol + NADPH + H(+). It catalyses the reaction D-xylose + NADP(+) = D-xylono-1,5-lactone + NADPH + H(+). This Macaca fascicularis (Crab-eating macaque) protein is Trans-1,2-dihydrobenzene-1,2-diol dehydrogenase (DHDH).